A 539-amino-acid chain; its full sequence is M protein, serotype 24 (539 aa).

A signal peptide spans 1-42 (MTKNNTNRHYSLRKLKTGTASVAVALTVLGAGLVVNTNEVSA). One copy of the A-1 repeat lies at 118 to 152 (LEARKADLEKALEGAMNFSTADSAKIKTLEAEKAA). Residues 118–301 (LEARKADLEK…ALEAEKADLE (184 aa)) form a 5.3 X 35 AA tandem repeats, A-type region. The A-2 repeat unit spans residues 153–187 (LAARKADLEKALEGAMNFSTADSAKIKTLEAEKAA). Residues 188–222 (LEARQAELEKALEGAMNFSTADSAKIKTLEAEKAA) form an A-3 repeat. An A-4 repeat occupies 223–257 (LAARKADLEKALEGAMNFSTADSAKIKTLEAEKAA). Residues 258–292 (LEARQAELEKALEGAMNFSTADSAKIKTLEAEKAA) form an A-5 repeat. One copy of the A-6; truncated repeat lies at 293 to 297 (LEAEK). A disordered region spans residues 297 to 401 (KADLEHQSQV…REAKKQVEKA (105 aa)). C repeat units follow at residues 298 to 332 (ADLE…EAEH), 333 to 367 (QKLE…EAEH), and 368 to 402 (QKLE…EKAL). Over residues 303–312 (QSQVLNANRQ) the composition is skewed to polar residues. 3 stretches are compositionally biased toward basic and acidic residues: residues 314 to 340 (LRRD…EQNK), 349 to 375 (LRRD…EQNK), and 384 to 401 (LRRD…VEKA). D repeat units lie at residues 435–440 (AKLEAE), 441–446 (AKALKE), 449–454 (AKQAEE), and 456–461 (AKLRAG). Positions 456 to 511 (AKLRAGKASDSQTPDAKPGNKAVPGKGQAPQAGTKPNQNKAPMKETKRQLPSTGET) are disordered. Residues 505–509 (LPSTG) carry the LPXTG sorting signal motif. At Thr508 the chain carries Pentaglycyl murein peptidoglycan amidated threonine. The propeptide at 509-539 (GETANPFFTAAALTVMATAGVAAVVKRKEEN) is removed by sortase.

The protein belongs to the M protein family.

Its subcellular location is the secreted. It localises to the cell wall. Its function is as follows. This protein is one of the different antigenic serotypes of protein M. Protein M is closely associated with virulence of the bacterium and can render the organism resistant to phagocytosis. The protein is M protein, serotype 24 (emm24) of Streptococcus pyogenes.